A 292-amino-acid polypeptide reads, in one-letter code: Elongation factor Ts (292 aa).

An involved in Mg(2+) ion dislocation from EF-Tu region spans residues Thr-79 to Val-82.

Belongs to the EF-Ts family.

The protein resides in the cytoplasm. Its function is as follows. Associates with the EF-Tu.GDP complex and induces the exchange of GDP to GTP. It remains bound to the aminoacyl-tRNA.EF-Tu.GTP complex up to the GTP hydrolysis stage on the ribosome. The protein is Elongation factor Ts of Xylella fastidiosa (strain 9a5c).